The following is a 339-amino-acid chain: Annexin A2 (339 aa).

Position 2 is an N-acetylserine (serine 2). Positions 2 to 24 (STVHEILCKLSLEGDHSTPPSAY) are S100A10-binding site. Tyrosine 24 bears the Phosphotyrosine; by SRC mark. A Phosphoserine; by PKC modification is found at serine 26. 2 Annexin repeats span residues 33 to 104 (FDAE…GLLK) and 105 to 176 (TPAQ…ALAK). Position 49 is an N6-acetyllysine; alternate (lysine 49). Residue lysine 49 forms a Glycyl lysine isopeptide (Lys-Gly) (interchain with G-Cter in SUMO1); alternate linkage. Lysine 49 is covalently cross-linked (Glycyl lysine isopeptide (Lys-Gly) (interchain with G-Cter in SUMO2); alternate). An N6-acetyllysine modification is found at lysine 152. At serine 184 the chain carries Phosphoserine. 2 Annexin repeats span residues 189–261 (ELID…NLVQ) and 265–336 (NKPL…YLCG). Tyrosine 199 carries the phosphotyrosine modification. Position 227 is an N6-acetyllysine (lysine 227).

The protein belongs to the annexin family. Heterotetramer containing 2 light chains of S100A10/p11 and 2 heavy chains of ANXA2/p36. Interacts with ATP1B1. Interacts with DYSF. Interacts with COCH. Interacts (via repeat Annexin 1) with PCSK9 (via the C-terminal domain); the interaction inhibits the degradation of LDLR. Interacts with CEACAM1 (via the cytoplasmic domain); this interaction is regulated by phosphorylation of CEACAM1. Interacts with APPL2 and APPL1; targets APPL2 to endosomes and acting in parallel to RAB5A. Interacts with S100A4. May interact with UBAP2. Interacts with PLEKHG4B; this interaction is required for PLEKHG4B localization to cell-cell adhesions. Interacts with FAM13A. Interacts with salivary cystatin-L2 (via loop 2) from the tick Ixodes scapularis; the interaction results in reduced activation of mouse NLRC4 inflammasome formation upon Anaplasma phagocytophilum infection. Post-translationally, ISGylated.

It is found in the secreted. Its subcellular location is the extracellular space. The protein resides in the extracellular matrix. It localises to the basement membrane. The protein localises to the melanosome. It is found in the early endosome. In terms of biological role, calcium-regulated membrane-binding protein whose affinity for calcium is greatly enhanced by anionic phospholipids. It binds two calcium ions with high affinity. May be involved in heat-stress response. Inhibits PCSK9-enhanced LDLR degradation, probably reduces PCSK9 protein levels via a translational mechanism but also competes with LDLR for binding with PCSK9. Binds to endosomes damaged by phagocytosis of particulate wear debris and participates in endosomal membrane stabilization, thereby limiting NLRP3 inflammasome activation. Required for endothelial cell surface plasmin generation and may support fibrinolytic surveillance and neoangiogenesis. Functionally, (Microbial infection) Regulates the formation of the NLRC4 inflammasome triggered by Anaplasma phagocytophilum infection. (Microbial infection) Protects against Klebsiella pneumoniae infection. Attenuates bacteria-induced pulmonary inflammation and promotes intro-abdominal pathogen clearance. Promotes anti-inflammatory responses by facilitating TLR4 internalization and translocation into early endosomal membranes; this leads to activation of TRAM-dependent endosomal signaling and release of anti-inflammatory cytokines. Its function is as follows. (Microbial infection) Promotes macrophage phagocytic efficiency towards Cryptococcus neoformans and ability to control fungal infection inside the cells. In terms of biological role, (Microbial infection) Contributes to protection against Pseudomonas aeruginosa infection by regulating autophagy via the AKT1-mTOR-ULK1/2 signaling pathway and activation of Rho GTPases via FAM13A-mediated mechanism. In Mus musculus (Mouse), this protein is Annexin A2 (Anxa2).